The chain runs to 326 residues: dTDP-4-dehydro-6-deoxy-D-allose reductase (326 aa).

NAD(+)-binding positions include 15–21 (GALGFIG) and 129–132 (MSSS). The active-site Proton donor/acceptor is Tyr-160. Residues Lys-164 and 187–190 (PGNV) contribute to the NAD(+) site.

The protein belongs to the NAD(P)-dependent epimerase/dehydratase family.

The enzyme catalyses dTDP-6-deoxy-alpha-D-allose + NAD(+) = dTDP-4-dehydro-6-deoxy-alpha-D-allose + NADH + H(+). The catalysed reaction is dTDP-6-deoxy-alpha-D-allose + NADP(+) = dTDP-4-dehydro-6-deoxy-alpha-D-allose + NADPH + H(+). In terms of biological role, catalyzes the stereospecific reduction of the C-4 keto group of dTDP-4-dehydro-6-deoxy-D-allose, leading to dTDP-6-deoxy-D-allose, an intermediate in the biosynthesis of the mycinose moiety of dihydrochalcomycin (GERI-155) antibiotic. Cannot directly reduce dTDP-4-dehydro-6-deoxyglucose, and thus acts after the epimerization step catalyzed by GerF. This is dTDP-4-dehydro-6-deoxy-D-allose reductase (gerKI) from Streptomyces sp.